The following is a 253-amino-acid chain: 23S rRNA (cytidine-2'-O)-methyltransferase TlyA (253 aa).

The region spanning 1 to 73 is the S4 RNA-binding domain; that stretch reads MRFDFFVSKR…LKLDLLSEIY (73 aa).

Belongs to the TlyA family.

It catalyses the reaction cytidine(1920) in 23S rRNA + S-adenosyl-L-methionine = 2'-O-methylcytidine(1920) in 23S rRNA + S-adenosyl-L-homocysteine + H(+). In terms of biological role, catalyzes the 2'-O-methylation at nucleotide C1920 in 23S rRNA. Enhances motility. Enhances biofilm formation. Involved in the assembly of 70S ribosomes. Involved in virulence by promoting adherence and invasion to host cells. Involved in pathogenicity by modulating secretion of host-protective chemokine interleukin 8 (IL-8). Involved in susceptibility to antibiotic capreomycin. This is 23S rRNA (cytidine-2'-O)-methyltransferase TlyA from Campylobacter jejuni subsp. jejuni serotype O:23/36 (strain 81-176).